Consider the following 156-residue polypeptide: Small ribosomal subunit protein uS7 (156 aa).

This sequence belongs to the universal ribosomal protein uS7 family. As to quaternary structure, part of the 30S ribosomal subunit. Contacts proteins S9 and S11.

Its function is as follows. One of the primary rRNA binding proteins, it binds directly to 16S rRNA where it nucleates assembly of the head domain of the 30S subunit. Is located at the subunit interface close to the decoding center, probably blocks exit of the E-site tRNA. This Idiomarina loihiensis (strain ATCC BAA-735 / DSM 15497 / L2-TR) protein is Small ribosomal subunit protein uS7.